Consider the following 898-residue polypeptide: Dipeptidyl peptidase 8 (898 aa).

Active-site charge relay system residues include serine 755, aspartate 833, and histidine 865.

It belongs to the peptidase S9B family. DPPIV subfamily. As to quaternary structure, homodimer. Forms a ternary complex with NLRP1, composed of a DPP8 homodimer, one full-length NLRP1 protein, and one cleaved C-terminus of NLRP1 (NACHT, LRR and PYD domains-containing protein 1, C-terminus). Forms a ternary complex with CARD8, composed of a DPP8 homodimer, one full-length NLRP1 protein, and one cleaved C-terminus of CARD8 (Caspase recruitment domain-containing protein 8, C-terminus). In the ternary complex, only one subunit of the DPP8 homodimer is bound to NLRP1 or CARD8. As to expression, ubiquitously expressed, with highest levels in testis, placenta, prostate, muscle and brain.

The protein resides in the cytoplasm. The catalysed reaction is Release of an N-terminal dipeptide, Xaa-Yaa-|-Zaa-, from a polypeptide, preferentially when Yaa is Pro, provided Zaa is neither Pro nor hydroxyproline.. With respect to regulation, inhibited by zinc. Inhibited by the serine proteinase inhibitor 4-(2-aminoethyl)benzenesulphonyl fluoride (AEBSF), and by di-isopropylfluorophosphate. Specifically inhibited by isoindoline derivatives. Inhibited by Val-boroPro (Talabostat, PT-100), a non-selective inhibitor, which triggers pyroptosis in monocytes and macrophages. In terms of biological role, dipeptidyl peptidase that cleaves off N-terminal dipeptides from proteins having a Pro or Ala residue at position 2. Acts as a key inhibitor of caspase-1-dependent monocyte and macrophage pyroptosis in resting cells by preventing activation of NLRP1 and CARD8. Sequesters the cleaved C-terminal part of NLRP1 and CARD8, which respectively constitute the active part of the NLRP1 and CARD8 inflammasomes, in a ternary complex, thereby preventing their oligomerization and activation. The dipeptidyl peptidase activity is required to suppress NLRP1 and CARD8; however, neither NLRP1 nor CARD8 are bona fide substrates of DPP8, suggesting the existence of substrate(s) required for NLRP1 and CARD8 inhibition. The sequence is that of Dipeptidyl peptidase 8 from Homo sapiens (Human).